Consider the following 205-residue polypeptide: Histidine biosynthesis bifunctional protein HisIE (205 aa).

The interval 1 to 115 (MIDIKELKFD…DEETEDGIEI (115 aa)) is phosphoribosyl-AMP cyclohydrolase. A phosphoribosyl-ATP pyrophosphohydrolase region spans residues 116-205 (LNKLYERIKG…YNELERRYKK (90 aa)).

It in the N-terminal section; belongs to the PRA-CH family. The protein in the C-terminal section; belongs to the PRA-PH family.

It localises to the cytoplasm. It catalyses the reaction 1-(5-phospho-beta-D-ribosyl)-ATP + H2O = 1-(5-phospho-beta-D-ribosyl)-5'-AMP + diphosphate + H(+). The catalysed reaction is 1-(5-phospho-beta-D-ribosyl)-5'-AMP + H2O = 1-(5-phospho-beta-D-ribosyl)-5-[(5-phospho-beta-D-ribosylamino)methylideneamino]imidazole-4-carboxamide. It participates in amino-acid biosynthesis; L-histidine biosynthesis; L-histidine from 5-phospho-alpha-D-ribose 1-diphosphate: step 2/9. It functions in the pathway amino-acid biosynthesis; L-histidine biosynthesis; L-histidine from 5-phospho-alpha-D-ribose 1-diphosphate: step 3/9. The sequence is that of Histidine biosynthesis bifunctional protein HisIE from Caldanaerobacter subterraneus subsp. tengcongensis (strain DSM 15242 / JCM 11007 / NBRC 100824 / MB4) (Thermoanaerobacter tengcongensis).